Here is a 283-residue protein sequence, read N- to C-terminus: Pyridoxine/pyridoxal/pyridoxamine kinase (283 aa).

Residues serine 23 and histidine 59 each coordinate substrate. Residue aspartate 125 coordinates ATP. Tyrosine 136 provides a ligand contact to Mg(2+). Residues threonine 157, glutamate 162, threonine 195, 222-225 (HAHV), and threonine 232 contribute to the ATP site. A Mg(2+)-binding site is contributed by glutamate 162. Aspartate 234 is a substrate binding site.

It belongs to the pyridoxine kinase family. PdxK subfamily. As to quaternary structure, homodimer. Mg(2+) serves as cofactor.

It carries out the reaction pyridoxal + ATP = pyridoxal 5'-phosphate + ADP + H(+). The catalysed reaction is pyridoxine + ATP = pyridoxine 5'-phosphate + ADP + H(+). The enzyme catalyses pyridoxamine + ATP = pyridoxamine 5'-phosphate + ADP + H(+). Its pathway is cofactor metabolism; pyridoxal 5'-phosphate salvage; pyridoxal 5'-phosphate from pyridoxal: step 1/1. It participates in cofactor metabolism; pyridoxal 5'-phosphate salvage; pyridoxine 5'-phosphate from pyridoxine: step 1/1. The protein operates within cofactor metabolism; pyridoxal 5'-phosphate salvage; pyridoxamine 5'-phosphate from pyridoxamine: step 1/1. Functionally, B6-vitamer kinase involved in the salvage pathway of pyridoxal 5'-phosphate (PLP). Catalyzes the phosphorylation of pyridoxine (PN), pyridoxal (PL), and pyridoxamine (PM), forming their respective 5'-phosphorylated esters, i.e. PNP, PLP and PMP. The polypeptide is Pyridoxine/pyridoxal/pyridoxamine kinase (Bordetella pertussis (strain Tohama I / ATCC BAA-589 / NCTC 13251)).